Here is a 422-residue protein sequence, read N- to C-terminus: Trigger factor (422 aa).

The PPIase FKBP-type domain maps to 158–242; the sequence is GDFAVVSLES…VKGLRKKELP (85 aa).

It belongs to the FKBP-type PPIase family. Tig subfamily.

The protein localises to the cytoplasm. The enzyme catalyses [protein]-peptidylproline (omega=180) = [protein]-peptidylproline (omega=0). Its function is as follows. Involved in protein export. Acts as a chaperone by maintaining the newly synthesized protein in an open conformation. Functions as a peptidyl-prolyl cis-trans isomerase. The protein is Trigger factor of Solibacter usitatus (strain Ellin6076).